A 546-amino-acid polypeptide reads, in one-letter code: Chaperonin GroEL (546 aa).

ATP-binding positions include 30–33 (TLGP), lysine 51, 87–91 (DGTTT), glycine 415, 479–481 (NAA), and aspartate 495. A disordered region spans residues 526–546 (KKDEPAMPAGGGMGGMGGMDF). Gly residues predominate over residues 534 to 546 (AGGGMGGMGGMDF).

Belongs to the chaperonin (HSP60) family. Forms a cylinder of 14 subunits composed of two heptameric rings stacked back-to-back. Interacts with the co-chaperonin GroES.

The protein localises to the cytoplasm. The enzyme catalyses ATP + H2O + a folded polypeptide = ADP + phosphate + an unfolded polypeptide.. In terms of biological role, together with its co-chaperonin GroES, plays an essential role in assisting protein folding. The GroEL-GroES system forms a nano-cage that allows encapsulation of the non-native substrate proteins and provides a physical environment optimized to promote and accelerate protein folding. This is Chaperonin GroEL from Xanthomonas oryzae pv. oryzae (strain MAFF 311018).